Here is a 461-residue protein sequence, read N- to C-terminus: Photosystem II CP43 reaction center protein (461 aa).

The propeptide occupies 1–2; the sequence is ME. T3 is modified (N-acetylthreonine). Phosphothreonine is present on T3. A run of 5 helical transmembrane segments spans residues 57-81, 122-143, 166-188, 243-263, and 279-300; these read LFEV…PHLA, LIGP…KDKN, KAMY…RIIT, TPWP…LSYS, and WFNN…ASQS. E355 lines the [CaMn4O5] cluster pocket. A helical membrane pass occupies residues 435–459; it reads RARAAAAGFEKGIDRLDEPVLSMRP.

This sequence belongs to the PsbB/PsbC family. PsbC subfamily. In terms of assembly, PSII is composed of 1 copy each of membrane proteins PsbA, PsbB, PsbC, PsbD, PsbE, PsbF, PsbH, PsbI, PsbJ, PsbK, PsbL, PsbM, PsbT, PsbX, PsbY, PsbZ, Psb30/Ycf12, at least 3 peripheral proteins of the oxygen-evolving complex and a large number of cofactors. It forms dimeric complexes. It depends on Binds multiple chlorophylls and provides some of the ligands for the Ca-4Mn-5O cluster of the oxygen-evolving complex. It may also provide a ligand for a Cl- that is required for oxygen evolution. PSII binds additional chlorophylls, carotenoids and specific lipids. as a cofactor.

The protein resides in the plastid. Its subcellular location is the chloroplast thylakoid membrane. One of the components of the core complex of photosystem II (PSII). It binds chlorophyll and helps catalyze the primary light-induced photochemical processes of PSII. PSII is a light-driven water:plastoquinone oxidoreductase, using light energy to abstract electrons from H(2)O, generating O(2) and a proton gradient subsequently used for ATP formation. This Tetradesmus obliquus (Green alga) protein is Photosystem II CP43 reaction center protein.